Here is a 391-residue protein sequence, read N- to C-terminus: Tryptophan synthase beta chain (391 aa).

An N6-(pyridoxal phosphate)lysine modification is found at Lys86.

Belongs to the TrpB family. In terms of assembly, tetramer of two alpha and two beta chains. Pyridoxal 5'-phosphate is required as a cofactor.

It catalyses the reaction (1S,2R)-1-C-(indol-3-yl)glycerol 3-phosphate + L-serine = D-glyceraldehyde 3-phosphate + L-tryptophan + H2O. It functions in the pathway amino-acid biosynthesis; L-tryptophan biosynthesis; L-tryptophan from chorismate: step 5/5. Functionally, the beta subunit is responsible for the synthesis of L-tryptophan from indole and L-serine. This Vibrio metschnikovii protein is Tryptophan synthase beta chain.